Here is a 374-residue protein sequence, read N- to C-terminus: Putative G-protein coupled receptor-like protein B0244.6 (374 aa).

At 1 to 54 the chain is on the extracellular side; sequence MTQNHYTTSIFANCSKHYEFEILLETCTNSTNPCHAVSQIQSAITIAYVDYYTS. Residues 55 to 75 form a helical membrane-spanning segment; it reads VALFSIAALLDIYCLIITIPL. Residues 76–86 lie on the Cytoplasmic side of the membrane; the sequence is YRRMKDDSKKK. Residues 87 to 107 form a helical membrane-spanning segment; that stretch reads YVFLITRCISGLLLVVAWLLI. Residues 108 to 137 are Extracellular-facing; that stretch reads QCIYLRFIAPSQDNLPYYVLALALNIGSTY. Residues 138 to 158 form a helical membrane-spanning segment; the sequence is VLLGSYVGMAGILYLGVLNPI. Residues 159-169 lie on the Cytoplasmic side of the membrane; that stretch reads AFNQHLTLRIV. The chain crosses the membrane as a helical span at residues 170 to 190; sequence YIAVCIIFVISIFISIPLAIF. The Extracellular segment spans residues 191 to 216; the sequence is QALMTVPTSSMSCTDTACAPLITLIN. Residues 217 to 237 form a helical membrane-spanning segment; that stretch reads FVLVFGSLITTTLTLTFVLIS. Over 238–262 the chain is Cytoplasmic; sequence LCRHRKEFKKLDTTSNTSLNSAVRL. Residues 263 to 283 form a helical membrane-spanning segment; the sequence is LKFTLFAVLLLVAAEVIPFVI. Residues 284-304 are Extracellular-facing; it reads SETKKKHSVVTGCYYFYHSGK. A helical membrane pass occupies residues 305 to 325; that stretch reads VIQYAVFALTESSIWSIALII. The Cytoplasmic segment spans residues 326–374; it reads DPLINIIFDRTVSKKATDQVKWMRKSCVGLVRKVTKRSNPENFTETSEI.

Belongs to the G-protein coupled receptor 1 family. B0244 subfamily.

The protein resides in the cell membrane. This chain is Putative G-protein coupled receptor-like protein B0244.6, found in Caenorhabditis elegans.